A 342-amino-acid chain; its full sequence is CMP-N-acetylneuraminate-beta-galactosamide-alpha-2,3-sialyltransferase 1 (342 aa).

Residues 1–10 (MVTVRKRNVK) lie on the Cytoplasmic side of the membrane. Residues 11–28 (VFTFAFVLITVTSFLLNY) traverse the membrane as a helical; Signal-anchor for type II membrane protein segment. The Lumenal portion of the chain corresponds to 29 to 342 (KHQVTMTTWD…IEKIKFFKGR (314 aa)). Cystine bridges form between cysteine 61–cysteine 66, cysteine 63–cysteine 141, and cysteine 144–cysteine 283. N-linked (GlcNAc...) asparagine glycosylation is present at asparagine 81. Glutamine 107 lines the substrate pocket. The N-linked (GlcNAc...) asparagine glycan is linked to asparagine 116. 2 residues coordinate substrate: asparagine 149 and asparagine 172. Residues asparagine 203 and asparagine 229 are each glycosylated (N-linked (GlcNAc...) asparagine). Residues tyrosine 232, tyrosine 268, glycine 272, glycine 292, and histidine 301 each contribute to the substrate site. Asparagine 306 is a glycosylation site (N-linked (GlcNAc...) asparagine). A substrate-binding site is contributed by histidine 318. N-linked (GlcNAc...) asparagine glycosylation is present at asparagine 325.

The protein belongs to the glycosyltransferase 29 family. The soluble form derives from the membrane form by proteolytic processing.

It is found in the golgi apparatus. It localises to the golgi stack membrane. The protein resides in the secreted. It catalyses the reaction a beta-D-galactosyl-(1-&gt;3)-N-acetyl-alpha-D-galactosaminyl derivative + CMP-N-acetyl-beta-neuraminate = an N-acetyl-alpha-neuraminyl-(2-&gt;3)-beta-D-galactosyl-(1-&gt;3)-N-acetyl-alpha-D-galactosaminyl derivative + CMP + H(+). Its pathway is protein modification; protein glycosylation. Functionally, responsible for the synthesis of the sequence NeuAc-alpha-2,3-Gal-beta-1,3-GalNAc- found on sugar chains O-linked to Thr or Ser and also as a terminal sequence on certain gangliosides. SIAT4A and SIAT4B sialylate the same acceptor substrates but exhibit different Km values. The sequence is that of CMP-N-acetylneuraminate-beta-galactosamide-alpha-2,3-sialyltransferase 1 (ST3GAL1) from Gallus gallus (Chicken).